We begin with the raw amino-acid sequence, 399 residues long: Elongation factor Tu (399 aa).

Residues lysine 10–valine 209 enclose the tr-type G domain. Residues glycine 19–threonine 26 are G1. A GTP-binding site is contributed by glycine 19–threonine 26. Residue threonine 26 coordinates Mg(2+). The segment at glycine 60–alanine 64 is G2. The tract at residues aspartate 81 to glycine 84 is G3. Residues aspartate 81–histidine 85 and asparagine 136–aspartate 139 contribute to the GTP site. Residues asparagine 136–aspartate 139 are G4. The G5 stretch occupies residues serine 174 to leucine 176.

It belongs to the TRAFAC class translation factor GTPase superfamily. Classic translation factor GTPase family. EF-Tu/EF-1A subfamily. As to quaternary structure, monomer.

The protein localises to the cytoplasm. The enzyme catalyses GTP + H2O = GDP + phosphate + H(+). Its function is as follows. GTP hydrolase that promotes the GTP-dependent binding of aminoacyl-tRNA to the A-site of ribosomes during protein biosynthesis. This Campylobacter fetus subsp. fetus (strain 82-40) protein is Elongation factor Tu.